The sequence spans 410 residues: MITHNFNTLDLLTSPVWIVSPFEEQLIYANSAARLLMQDLTFSQLRTGPYSVSSQKELPKYLSDLQNQHDIIEILTVQRKEEETALSCRLVLRELTETEPVIIFEGIEAPATLGLKASRSANYQRKKQGFYARFFLTNSAPMLLIDPSRDGQIVDANLAALNFYGYNHETMCQKHTWEINMLGRRVMPIMHEISHLPGGHKPLNFIHKLADGSTRHVQTYAGPIEIYGDKLMLCIVHDITEQKRLEEQLEHAAHHDAMTGLLNRRQFYHITEPGQMQHLAIAQDYSLLLIDTDRFKHINDLYGHSKGDEVLCALARTLESCARKGDLVFRWGGEEFVLLLPRTPLDTALSLAETIRVSVAKVSISGLPRFTVSIGVAHHEGNESIDELFKRVDDALYRAKNDGRNRVLAA.

PAS domains are found at residues 3–70 and 129–198; these read THNF…NQHD and GFYA…HLPG. One can recognise a PAC domain in the interval 199–251; the sequence is GHKPLNFIHKLADGSTRHVQTYAGPIEIYGDKLMLCIVHDITEQKRLEEQLEH. One can recognise a GGDEF domain in the interval 283–410; it reads QDYSLLLIDT…NDGRNRVLAA (128 aa). Mg(2+) is bound at residue aspartate 291. Residues asparagine 299, histidine 304, and aspartate 308 each coordinate substrate. Glutamate 334 contributes to the Mg(2+) binding site. Glutamate 334 (proton acceptor) is an active-site residue.

It depends on Mg(2+) as a cofactor.

The catalysed reaction is 2 GTP = 3',3'-c-di-GMP + 2 diphosphate. It functions in the pathway purine metabolism; 3',5'-cyclic di-GMP biosynthesis. Its function is as follows. Part of a signaling cascade that regulates curli biosynthesis. The cascade is composed of two cyclic-di-GMP (c-di-GMP) control modules, in which c-di-GMP controlled by the DgcE/PdeH pair (module I) regulates the activity of the DgcM/PdeR pair (module II), which in turn regulates activity of the transcription factor MlrA and expression of the master biofilm regulator csgD. The sequence is that of Diguanylate cyclase DgcM from Escherichia coli O157:H7.